An 848-amino-acid chain; its full sequence is DNA mismatch repair protein MutS (848 aa).

605–612 (GPNMAGKS) is an ATP binding site.

This sequence belongs to the DNA mismatch repair MutS family.

In terms of biological role, this protein is involved in the repair of mismatches in DNA. It is possible that it carries out the mismatch recognition step. This protein has a weak ATPase activity. This is DNA mismatch repair protein MutS from Leptospira interrogans serogroup Icterohaemorrhagiae serovar copenhageni (strain Fiocruz L1-130).